A 100-amino-acid chain; its full sequence is Urease subunit gamma (100 aa).

This sequence belongs to the urease gamma subunit family. In terms of assembly, heterotrimer of UreA (gamma), UreB (beta) and UreC (alpha) subunits. Three heterotrimers associate to form the active enzyme.

It is found in the cytoplasm. The catalysed reaction is urea + 2 H2O + H(+) = hydrogencarbonate + 2 NH4(+). It functions in the pathway nitrogen metabolism; urea degradation; CO(2) and NH(3) from urea (urease route): step 1/1. This Rhodopseudomonas palustris (strain BisB18) protein is Urease subunit gamma.